A 237-amino-acid chain; its full sequence is uncharacterized protein (237 aa).

21-28 (GCDGSGKS) contacts ATP.

To E.coli YghR and YghT.

This is an uncharacterized protein from Escherichia coli (strain K12).